The primary structure comprises 518 residues: Dihydropyrimidinase 2 (518 aa).

Histidine 59, histidine 61, and lysine 152 together coordinate Zn(2+). Lysine 152 bears the N6-carboxylysine mark. Tyrosine 157 contacts substrate. Positions 185 and 241 each coordinate Zn(2+). Residue serine 291 coordinates substrate. Residue aspartate 319 participates in Zn(2+) binding. Asparagine 340 contacts substrate.

This sequence belongs to the metallo-dependent hydrolases superfamily. Hydantoinase/dihydropyrimidinase family. Homotetramer. Requires Zn(2+) as cofactor. Carboxylation allows a single lysine to coordinate two zinc ions.

It carries out the reaction 5,6-dihydrouracil + H2O = 3-(carbamoylamino)propanoate + H(+). This chain is Dihydropyrimidinase 2 (dhp-2), found in Caenorhabditis briggsae.